A 978-amino-acid chain; its full sequence is Tyrosine-protein kinase transforming protein fms (978 aa).

Residues 1 to 543 (RMPSGPGHYG…IGAHTPLPDE (543 aa)) lie on the Extracellular side of the membrane. 5 consecutive Ig-like C2-type domains span residues 55-134 (PVIQ…IHLY), 141-231 (PWKV…KVQK), 236-331 (PATL…RVVE), 333-431 (AYSN…LTLR), and 434-533 (PEVR…WPIS). Cysteines 76 and 118 form a disulfide. Residues asparagine 79, asparagine 107, asparagine 128, asparagine 187, asparagine 309, asparagine 320, asparagine 336, asparagine 369, asparagine 444, asparagine 511, and asparagine 524 are each glycosylated (N-linked (GlcNAc...) asparagine; by host). Disulfide bonds link cysteine 161/cysteine 211 and cysteine 258/cysteine 312. An intrachain disulfide couples cysteine 451 to cysteine 516. Residues 544-568 (LLFTPVLLTCMSIMALLLLLLLLLL) traverse the membrane as a helical segment. Topologically, residues 569–978 (YKYKQKPKYQ…PWQRTPPVAR (410 aa)) are cytoplasmic. A Protein kinase domain is found at 613–942 (LQFGKTLGTG…PTFQQICSLL (330 aa)). ATP is bound by residues 619 to 627 (LGTGAFGKV) and lysine 647. The active-site Proton acceptor is the aspartate 810. The residue at position 841 (tyrosine 841) is a Phosphotyrosine; by autocatalysis. Positions 952-978 (VPNYTNLPSSSSSRLLRPWQRTPPVAR) are disordered. The span at 958-969 (LPSSSSSRLLRP) shows a compositional bias: low complexity. The residue at position 973 (threonine 973) is a Phosphothreonine.

It belongs to the protein kinase superfamily. Tyr protein kinase family. CSF-1/PDGF receptor subfamily.

The protein resides in the membrane. The enzyme catalyses L-tyrosyl-[protein] + ATP = O-phospho-L-tyrosyl-[protein] + ADP + H(+). In terms of biological role, truncated version of the receptor for colony-stimulating factor 1 (CSF-1). This Felidae (cat family) protein is Tyrosine-protein kinase transforming protein fms (V-FMS).